The following is a 349-amino-acid chain: Phenylalanine--tRNA ligase alpha subunit (349 aa).

A Mg(2+)-binding site is contributed by glutamate 264.

The protein belongs to the class-II aminoacyl-tRNA synthetase family. Phe-tRNA synthetase alpha subunit type 1 subfamily. In terms of assembly, tetramer of two alpha and two beta subunits. It depends on Mg(2+) as a cofactor.

Its subcellular location is the cytoplasm. It catalyses the reaction tRNA(Phe) + L-phenylalanine + ATP = L-phenylalanyl-tRNA(Phe) + AMP + diphosphate + H(+). In Myxococcus xanthus (strain DK1622), this protein is Phenylalanine--tRNA ligase alpha subunit.